Consider the following 258-residue polypeptide: D-aminoacyl-tRNA deacylase (258 aa).

It belongs to the DtdA deacylase family. In terms of assembly, monomer. It depends on Zn(2+) as a cofactor.

The catalysed reaction is a D-aminoacyl-tRNA + H2O = a tRNA + a D-alpha-amino acid + H(+). It carries out the reaction glycyl-tRNA(Ala) + H2O = tRNA(Ala) + glycine + H(+). Its function is as follows. D-aminoacyl-tRNA deacylase with broad substrate specificity. By recycling D-aminoacyl-tRNA to D-amino acids and free tRNA molecules, this enzyme counteracts the toxicity associated with the formation of D-aminoacyl-tRNA entities in vivo. This chain is D-aminoacyl-tRNA deacylase, found in Cenarchaeum symbiosum (strain A).